Here is a 218-residue protein sequence, read N- to C-terminus: Probable transaldolase (218 aa).

The Schiff-base intermediate with substrate role is filled by Lys-83.

This sequence belongs to the transaldolase family. Type 3B subfamily.

The protein resides in the cytoplasm. It catalyses the reaction D-sedoheptulose 7-phosphate + D-glyceraldehyde 3-phosphate = D-erythrose 4-phosphate + beta-D-fructose 6-phosphate. Its pathway is carbohydrate degradation; pentose phosphate pathway; D-glyceraldehyde 3-phosphate and beta-D-fructose 6-phosphate from D-ribose 5-phosphate and D-xylulose 5-phosphate (non-oxidative stage): step 2/3. Functionally, transaldolase is important for the balance of metabolites in the pentose-phosphate pathway. The chain is Probable transaldolase from Parvibaculum lavamentivorans (strain DS-1 / DSM 13023 / NCIMB 13966).